The primary structure comprises 456 residues: Serine--tRNA ligase (456 aa).

Positions 49-69 (HERNEVSSTIGELKQAGEEEA) are disordered. 241-243 (TAE) contacts L-serine. ATP-binding positions include 272–274 (RQE) and Val288. An L-serine-binding site is contributed by Glu295. Position 368 to 371 (368 to 371 (EVSS)) interacts with ATP. Ser404 is a binding site for L-serine.

It belongs to the class-II aminoacyl-tRNA synthetase family. Type-1 seryl-tRNA synthetase subfamily. In terms of assembly, homodimer. The tRNA molecule binds across the dimer.

It is found in the cytoplasm. The catalysed reaction is tRNA(Ser) + L-serine + ATP = L-seryl-tRNA(Ser) + AMP + diphosphate + H(+). It carries out the reaction tRNA(Sec) + L-serine + ATP = L-seryl-tRNA(Sec) + AMP + diphosphate + H(+). Its pathway is aminoacyl-tRNA biosynthesis; selenocysteinyl-tRNA(Sec) biosynthesis; L-seryl-tRNA(Sec) from L-serine and tRNA(Sec): step 1/1. In terms of biological role, catalyzes the attachment of serine to tRNA(Ser). Is also able to aminoacylate tRNA(Sec) with serine, to form the misacylated tRNA L-seryl-tRNA(Sec), which will be further converted into selenocysteinyl-tRNA(Sec). This chain is Serine--tRNA ligase, found in Halorubrum lacusprofundi (strain ATCC 49239 / DSM 5036 / JCM 8891 / ACAM 34).